A 176-amino-acid polypeptide reads, in one-letter code: ATP synthase subunit delta (176 aa).

The protein belongs to the ATPase delta chain family. As to quaternary structure, F-type ATPases have 2 components, F(1) - the catalytic core - and F(0) - the membrane proton channel. F(1) has five subunits: alpha(3), beta(3), gamma(1), delta(1), epsilon(1). F(0) has three main subunits: a(1), b(2) and c(10-14). The alpha and beta chains form an alternating ring which encloses part of the gamma chain. F(1) is attached to F(0) by a central stalk formed by the gamma and epsilon chains, while a peripheral stalk is formed by the delta and b chains.

It is found in the cell inner membrane. Functionally, f(1)F(0) ATP synthase produces ATP from ADP in the presence of a proton or sodium gradient. F-type ATPases consist of two structural domains, F(1) containing the extramembraneous catalytic core and F(0) containing the membrane proton channel, linked together by a central stalk and a peripheral stalk. During catalysis, ATP synthesis in the catalytic domain of F(1) is coupled via a rotary mechanism of the central stalk subunits to proton translocation. This protein is part of the stalk that links CF(0) to CF(1). It either transmits conformational changes from CF(0) to CF(1) or is implicated in proton conduction. The sequence is that of ATP synthase subunit delta from Campylobacter fetus subsp. fetus (strain 82-40).